The chain runs to 202 residues: Peptide deformylase (202 aa).

Residues 1–24 (MAGSFAQLAKNAEKKKPSISVSKE) form a disordered region. C121 and H163 together coordinate Fe cation. E164 is a catalytic residue. H167 contacts Fe cation.

Belongs to the polypeptide deformylase family. Fe(2+) is required as a cofactor.

It catalyses the reaction N-terminal N-formyl-L-methionyl-[peptide] + H2O = N-terminal L-methionyl-[peptide] + formate. In terms of biological role, removes the formyl group from the N-terminal Met of newly synthesized proteins. Requires at least a dipeptide for an efficient rate of reaction. N-terminal L-methionine is a prerequisite for activity but the enzyme has broad specificity at other positions. This is Peptide deformylase from Prochlorococcus marinus (strain NATL1A).